The primary structure comprises 64 residues: DNA gyrase inhibitor YacG (64 aa).

Residues C6, C9, C25, and C29 each contribute to the Zn(2+) site.

It belongs to the DNA gyrase inhibitor YacG family. As to quaternary structure, interacts with GyrB. Zn(2+) serves as cofactor.

Functionally, inhibits all the catalytic activities of DNA gyrase by preventing its interaction with DNA. Acts by binding directly to the C-terminal domain of GyrB, which probably disrupts DNA binding by the gyrase. This is DNA gyrase inhibitor YacG from Haemophilus influenzae (strain ATCC 51907 / DSM 11121 / KW20 / Rd).